A 406-amino-acid chain; its full sequence is Cysteine desulfurase (406 aa).

N6-(pyridoxal phosphate)lysine is present on lysine 226. Cysteine 364 serves as the catalytic Cysteine persulfide intermediate.

The protein belongs to the class-V pyridoxal-phosphate-dependent aminotransferase family. Csd subfamily. As to quaternary structure, homodimer. Interacts with SufE and the SufBCD complex composed of SufB, SufC and SufD. The interaction with SufE is required to mediate the direct transfer of the sulfur atom from the S-sulfanylcysteine. Pyridoxal 5'-phosphate serves as cofactor.

It localises to the cytoplasm. It catalyses the reaction (sulfur carrier)-H + L-cysteine = (sulfur carrier)-SH + L-alanine. The enzyme catalyses L-selenocysteine + AH2 = hydrogenselenide + L-alanine + A + H(+). Its pathway is cofactor biosynthesis; iron-sulfur cluster biosynthesis. Cysteine desulfurases mobilize the sulfur from L-cysteine to yield L-alanine, an essential step in sulfur metabolism for biosynthesis of a variety of sulfur-containing biomolecules. Component of the suf operon, which is activated and required under specific conditions such as oxidative stress and iron limitation. Acts as a potent selenocysteine lyase in vitro, that mobilizes selenium from L-selenocysteine. Selenocysteine lyase activity is however unsure in vivo. The sequence is that of Cysteine desulfurase from Salmonella agona (strain SL483).